Consider the following 112-residue polypeptide: Nitrogen regulatory protein GlnK2 (112 aa).

Residues threonine 29, 38–39 (QQ), valine 64, and 87–90 (GDGK) each bind ADP. Residues threonine 29, 38–39 (QQ), valine 64, 87–90 (GDGK), and 101–103 (RIR) contribute to the ATP site.

The protein belongs to the P(II) protein family. As to quaternary structure, homotrimer. Interacts and forms a complex with Amt2.

It is found in the cytoplasm. With respect to regulation, binding of adenosine nucleotides results in distinct, cooperative behavior for ATP and ADP. GlnK2 is completely insensitive to 2-oxoglutarate at a low level of intracellular nitrogen. Its function is as follows. Involved in the regulation of nitrogen metabolism. Regulates the activity of its targets by protein-protein interaction in response to the nitrogen status of the cell. Regulates the activity of the ammonia channel Amt2 via direct interaction. This chain is Nitrogen regulatory protein GlnK2, found in Archaeoglobus fulgidus (strain ATCC 49558 / DSM 4304 / JCM 9628 / NBRC 100126 / VC-16).